Here is a 357-residue protein sequence, read N- to C-terminus: Ribosomal RNA large subunit methyltransferase M (357 aa).

S-adenosyl-L-methionine-binding positions include S190, 223-226, D242, D262, and D278; that span reads APGG. K307 acts as the Proton acceptor in catalysis.

The protein belongs to the class I-like SAM-binding methyltransferase superfamily. RNA methyltransferase RlmE family. RlmM subfamily. In terms of assembly, monomer.

The protein localises to the cytoplasm. It carries out the reaction cytidine(2498) in 23S rRNA + S-adenosyl-L-methionine = 2'-O-methylcytidine(2498) in 23S rRNA + S-adenosyl-L-homocysteine + H(+). Functionally, catalyzes the 2'-O-methylation at nucleotide C2498 in 23S rRNA. The chain is Ribosomal RNA large subunit methyltransferase M from Chromohalobacter salexigens (strain ATCC BAA-138 / DSM 3043 / CIP 106854 / NCIMB 13768 / 1H11).